A 504-amino-acid chain; its full sequence is Arabinose import ATP-binding protein AraG (504 aa).

2 consecutive ABC transporter domains span residues 8-243 (LSFR…MVGR) and 256-499 (YGEE…MPKV). 40–47 (GENGAGKS) is a binding site for ATP.

It belongs to the ABC transporter superfamily. Arabinose importer (TC 3.A.1.2.2) family. In terms of assembly, the complex is composed of two ATP-binding proteins (AraG), two transmembrane proteins (AraH) and a solute-binding protein (AraF).

It is found in the cell inner membrane. The enzyme catalyses L-arabinose(out) + ATP + H2O = L-arabinose(in) + ADP + phosphate + H(+). In terms of biological role, part of the ABC transporter complex AraFGH involved in arabinose import. Responsible for energy coupling to the transport system. The chain is Arabinose import ATP-binding protein AraG from Escherichia coli O6:K15:H31 (strain 536 / UPEC).